The primary structure comprises 479 residues: MNTILAQQIANEGGVEAWMMAQQHKSLLRFLTCGSVDDGKSTLIGRLLHDTLQIYEDQLSSLHNDSKRHGTQGEKLDLALLVDGLQAEREQGITIDVAYRYFSTEKRKFIIADTPGHEQYTRNMATGASTCDLAILLIDARKGVLDQTRRHSFISTLLGIKHLVVAINKMDLVDYREETFARIREDYLTFAEQLPGDLDIRFVPLSALEGDNVAAQSANMRWYSGPTLLEVLETVDIQRAVDRQPMRFPVQYVNRPNLDFRGYAGTLASGSVKVGERIKVLPSGVESSVARIVTFDGDKEEACAGEAITLVLNDDIDISRGDLLLAANETLAPARHAAIDVVWMAEQPLAPGQSYDVKLAGKKTRARIEAIRYQIDINNLTQRDVESLPLNGIGLVEMTFDEPLALDIYQQNPVTGGLIFIDRLSNVTVGAGMVRELDERGATPPVEYSAFELELNALVRRHFPHWDARDLLGDKHGAA.

One can recognise a tr-type G domain in the interval 25–239 (KSLLRFLTCG…EVLETVDIQR (215 aa)). The tract at residues 34–41 (GSVDDGKS) is G1. Residue 34–41 (GSVDDGKS) coordinates GTP. Residues 92–96 (GITID) form a G2 region. Positions 113 to 116 (DTPG) are G3. GTP is bound by residues 113-117 (DTPGH) and 168-171 (NKMD). The G4 stretch occupies residues 168–171 (NKMD). Positions 206-208 (SAL) are G5.

The protein belongs to the TRAFAC class translation factor GTPase superfamily. Classic translation factor GTPase family. CysN/NodQ subfamily. As to quaternary structure, heterodimer composed of CysD, the smaller subunit, and CysN.

The enzyme catalyses sulfate + ATP + H(+) = adenosine 5'-phosphosulfate + diphosphate. Its pathway is sulfur metabolism; hydrogen sulfide biosynthesis; sulfite from sulfate: step 1/3. In terms of biological role, with CysD forms the ATP sulfurylase (ATPS) that catalyzes the adenylation of sulfate producing adenosine 5'-phosphosulfate (APS) and diphosphate, the first enzymatic step in sulfur assimilation pathway. APS synthesis involves the formation of a high-energy phosphoric-sulfuric acid anhydride bond driven by GTP hydrolysis by CysN coupled to ATP hydrolysis by CysD. The chain is Sulfate adenylyltransferase subunit 1 from Salmonella agona (strain SL483).